Consider the following 503-residue polypeptide: UDP-N-acetylmuramate--L-alanine ligase (503 aa).

120–126 provides a ligand contact to ATP; sequence GTHGKTS.

The protein belongs to the MurCDEF family.

It is found in the cytoplasm. It catalyses the reaction UDP-N-acetyl-alpha-D-muramate + L-alanine + ATP = UDP-N-acetyl-alpha-D-muramoyl-L-alanine + ADP + phosphate + H(+). The protein operates within cell wall biogenesis; peptidoglycan biosynthesis. In terms of biological role, cell wall formation. The sequence is that of UDP-N-acetylmuramate--L-alanine ligase from Rhodococcus opacus (strain B4).